The primary structure comprises 306 residues: sn-1-specific diacylglycerol lipase ABHD11 (306 aa).

The tract at residues 19-40 is disordered; sequence GPSFARVPVAPSSSSGGRGGAE. Residues 23 to 33 are compositionally biased toward low complexity; the sequence is ARVPVAPSSSS. Lys-78 is modified (N6-succinyllysine). Active-site charge relay system residues include Ser-132, Asp-228, and His-287.

The protein belongs to the AB hydrolase superfamily. In terms of assembly, interacts with OGDH and DLST; this interaction maintains the functional lipoylation of the 2-oxoglutarate dehydrogenase complex. Post-translationally, phosphorylated. Ubiquitously expressed. Highly expressed in small intestine, prostate and thyroid, while aorta and colon tissues exhibit weak expression levels.

The protein localises to the mitochondrion. It is found in the mitochondrion matrix. The enzyme catalyses 1-octadecanoyl-2-(5Z,8Z,11Z,14Z-eicosatetraenoyl)-sn-glycerol + H2O = 2-(5Z,8Z,11Z,14Z-eicosatetraenoyl)-glycerol + octadecanoate + H(+). It carries out the reaction a 1,2-diacyl-sn-glycerol + H2O = a 2-acylglycerol + a fatty acid + H(+). The catalysed reaction is a 1,3-diacyl-sn-glycerol + H2O = a 1-acyl-sn-glycerol + a fatty acid + H(+). It catalyses the reaction 1-octadecanoyl-2-(9Z-octadecenoyl)-sn-glycerol + H2O = 2-(9Z-octadecenoyl)-glycerol + octadecanoate + H(+). The enzyme catalyses 1-octadecanoyl-2-(4Z,7Z,10Z,13Z,16Z,19Z-docosahexaenoyl)-sn-glycerol + H2O = 2-(4Z,7Z,10Z,13Z,16Z,19Z-docosahexaenoyl)-glycerol + octadecanoate + H(+). It carries out the reaction 1,2-didecanoylglycerol + H2O = decanoylglycerol + decanoate + H(+). Catalyzes the hydrolysis of diacylglycerol in vitro and may function as a key regulator in lipid metabolism, namely by regulating the intracellular levels of diacylglycerol. 1,2-diacyl-sn-glycerols are the preferred substrate over 1,3-diacyl-sn-glycerols. The enzyme hydrolyzes stearate in preference to palmitate from the sn-1 position of 1,2-diacyl-sn-glycerols. Maintains the functional lipoylation of the 2-oxoglutarate dehydrogenase complex (OGDHc) through its interaction with the OGDHc by preventing the formation of lipoyl adducts. In addition, is also required for the expansion and differentiation of embryonic stem cells (ESCs). This Homo sapiens (Human) protein is sn-1-specific diacylglycerol lipase ABHD11.